The following is a 414-amino-acid chain: Tyrosine--tRNA ligase (414 aa).

L-tyrosine is bound at residue tyrosine 38. Residues 43–52 carry the 'HIGH' region motif; that stretch reads CTARSLHIGS. L-tyrosine is bound by residues tyrosine 172 and glutamine 176. The short motif at 232–236 is the 'KMSKS' region element; sequence KMGKT. ATP is bound at residue lysine 235. Residues 345-412 enclose the S4 RNA-binding domain; it reads ISVAKLLQLA…GKKRRIKVVV (68 aa).

This sequence belongs to the class-I aminoacyl-tRNA synthetase family. TyrS type 1 subfamily. As to quaternary structure, homodimer.

The protein resides in the cytoplasm. It carries out the reaction tRNA(Tyr) + L-tyrosine + ATP = L-tyrosyl-tRNA(Tyr) + AMP + diphosphate + H(+). In terms of biological role, catalyzes the attachment of tyrosine to tRNA(Tyr) in a two-step reaction: tyrosine is first activated by ATP to form Tyr-AMP and then transferred to the acceptor end of tRNA(Tyr). The polypeptide is Tyrosine--tRNA ligase (Anaplasma marginale (strain St. Maries)).